The following is a 673-amino-acid chain: F-box/LRR-repeat protein 17 (673 aa).

The tract at residues 1–39 (MGHVAPHASKKEHVAPHAAEKDHVAPHASKKEHVAPHAA) is disordered. Residues 9-39 (SKKEHVAPHAAEKDHVAPHASKKEHVAPHAA) are compositionally biased toward basic and acidic residues. The region spanning 291 to 338 (PLHINQLPSSLLLKIFSNLSLNERCILASLVCKYWRDLCLDSQFWKQL) is the F-box domain.

It belongs to the FBXL17 family. As to quaternary structure, part of the SCF (SKP1-CUL1-F-box) E3 ubiquitin-protein ligase complex SCF(FBXL17). Interacts with BTB domain-containing proteins; specifically recognizes and binds a conserved degron of non-consecutive residues present at the interface of BTB dimers of aberrant composition. In terms of tissue distribution, expressed in the neuro-ectoderm of embryos.

It localises to the cytoplasm. It is found in the nucleus. In terms of biological role, substrate-recognition component of the SCF(FBXL17) E3 ubiquitin ligase complex, a key component of a quality control pathway required to ensure functional dimerization of BTB domain-containing proteins (dimerization quality control, DQC). FBXL17 specifically recognizes and binds a conserved degron of non-consecutive residues present at the interface of BTB dimers of aberrant composition: aberrant BTB dimer are then ubiquitinated by the SCF(FBXL17) complex and degraded by the proteasome. The ability of the SCF(FBXL17) complex to eliminate compromised BTB dimers is required for the differentiation and survival of neural crest and neuronal cells. The sequence is that of F-box/LRR-repeat protein 17 from Xenopus laevis (African clawed frog).